Reading from the N-terminus, the 343-residue chain is Glyceraldehyde-3-phosphate dehydrogenase (343 aa).

NAD(+)-binding positions include 11-12 (TI) and glycine 110. 139-141 (SCN) lines the D-glyceraldehyde 3-phosphate pocket. The Nucleophile role is filled by cysteine 140. Arginine 168 contributes to the NAD(+) binding site. A D-glyceraldehyde 3-phosphate-binding site is contributed by 194-195 (HG). Glutamine 301 is a binding site for NAD(+).

It belongs to the glyceraldehyde-3-phosphate dehydrogenase family. In terms of assembly, homotetramer.

It localises to the cytoplasm. It catalyses the reaction D-glyceraldehyde 3-phosphate + phosphate + NADP(+) = (2R)-3-phospho-glyceroyl phosphate + NADPH + H(+). The enzyme catalyses D-glyceraldehyde 3-phosphate + phosphate + NAD(+) = (2R)-3-phospho-glyceroyl phosphate + NADH + H(+). The protein operates within carbohydrate degradation; glycolysis; pyruvate from D-glyceraldehyde 3-phosphate: step 1/5. In Methanoregula boonei (strain DSM 21154 / JCM 14090 / 6A8), this protein is Glyceraldehyde-3-phosphate dehydrogenase.